The primary structure comprises 511 residues: Chaperone protein HscA (511 aa).

The protein belongs to the heat shock protein 70 family.

Chaperone involved in the maturation of iron-sulfur cluster-containing proteins. Has a low intrinsic ATPase activity which is markedly stimulated by HscB. Involved in the maturation of IscU. The chain is Chaperone protein HscA (hscA) from Buchnera aphidicola subsp. Baizongia pistaciae (strain Bp).